The chain runs to 89 residues: MAEENIIFVGKKPTMNYVLAVVTQFNNNANKIIIKARGKTISKAVDVAEITRHKFIPDAKYEEIKLDTETLQGERGSSNVSSIEITLSR.

Lys-11 carries the post-translational modification N6-acetyllysine.

It belongs to the histone-like Alba family. In terms of processing, acetylated. Acetylation at Lys-11 decreases DNA-binding affinity.

The protein resides in the cytoplasm. The protein localises to the chromosome. In terms of biological role, binds double-stranded DNA tightly but without sequence specificity. Involved in DNA compaction. The polypeptide is DNA/RNA-binding protein Alba (Thermoplasma acidophilum (strain ATCC 25905 / DSM 1728 / JCM 9062 / NBRC 15155 / AMRC-C165)).